Reading from the N-terminus, the 97-residue chain is Lipolysis-activating peptide 1-alpha chain (97 aa).

The N-terminal stretch at 1-21 is a signal peptide; sequence MNIMLFCSVFILVSLTGLSVS. The region spanning 25-88 is the LCN-type CS-alpha/beta domain; the sequence is PGNYPMSLYG…FWAAHKNHCK (64 aa). Intrachain disulfides connect C39–C62, C48–C67, and C52–C69.

It belongs to the long (3 C-C) scorpion toxin superfamily. As to quaternary structure, monomer (edited version) and heterodimer (non-edited version) of this alpha chain and a beta chain (AC P0CI43). In terms of tissue distribution, expressed by the venom gland.

It is found in the secreted. Its function is as follows. The heterodimer non-edited LVP1 induces lipolysis in rat adipocytes. Induction of lipolysis by LVP1 appears to be mediated through the beta-2 adrenergic receptor pathway (ADRB2). Functionally, the edited BmKBTx-like, similar to beta-toxins, may modulate voltage-gated sodium channels (Nav) and may block voltage-gated potassium channels (Kv). This chain is Lipolysis-activating peptide 1-alpha chain, found in Lychas mucronatus (Chinese swimming scorpion).